The following is a 1503-amino-acid chain: Mitogen-activated protein kinase-binding protein 1 (1503 aa).

12 WD repeats span residues 89 to 130, 133 to 174, 176 to 214, 271 to 310, 337 to 376, 382 to 431, 472 to 511, 514 to 556, 560 to 601, 609 to 648, 654 to 693, and 696 to 735; these read SSRK…QVAE, EHKY…VVAS, KVSS…TSKV, VELR…FLST, ARYP…KVGK, YHSS…VHGS, DPRV…EMLK, AHDS…SLQQ, EHSS…EGVQ, VRKT…QKKL, GEDG…CVAT, and GHSE…TISM. Disordered regions lie at residues 745–817, 874–917, and 951–1176; these read RQRG…SSPA, LAPS…RLQT, and VYPE…SWAS. A compositionally biased stretch (acidic residues) spans 784 to 796; it reads KEGEDEGTEEEEL. 2 stretches are compositionally biased toward polar residues: residues 905–917 and 957–972; these read CVSQ…RLQT and DSPT…QAPT. The span at 1028–1043 shows a compositional bias: acidic residues; sequence DLEEPAEGDEDEEEEG. Positions 1058-1068 are enriched in basic and acidic residues; it reads PDQEQFLKQHF. Residues 1089-1129 are compositionally biased toward polar residues; sequence SQSISSRFLLQVQTSPLREPSLSSSGLALTSRPDQVSQVSG. Position 1193 is a phosphoserine (Ser-1193). Disordered stretches follow at residues 1217 to 1238 and 1369 to 1391; these read QGSL…SYQN and QGPE…SSRP.

In terms of assembly, can form homodimers (via C-terminus). Interacts (via C-terminus) with WDR62 (via C-terminus). Interacts with MAPK9. Interacts (via N-terminus) with NOD2; the interaction is enhanced in presence of muramyl dipeptide (MDP). Interacts with MAPK10. As to expression, ubiquitously expressed. Highest expression observed in brain.

It is found in the cytoplasm. Its subcellular location is the nucleus. It localises to the cytoskeleton. The protein resides in the spindle pole. Functionally, negative regulator of NOD2 function. It down-regulates NOD2-induced processes such as activation of NF-kappa-B signaling, IL8 secretion and antibacterial response. Involved in JNK signaling pathway. The polypeptide is Mitogen-activated protein kinase-binding protein 1 (Mapkbp1) (Mus musculus (Mouse)).